We begin with the raw amino-acid sequence, 341 residues long: Inositol monophosphatase 3 (341 aa).

A helical transmembrane segment spans residues 11–31 (LGIAVFCLLGVGVIYHLYAGV). Residues E117, D157, L159, D160, and D283 each coordinate Mg(2+). E117 provides a ligand contact to substrate. Substrate contacts are provided by residues 159-162 (LDAT) and D283.

The protein belongs to the inositol monophosphatase superfamily. It depends on Mg(2+) as a cofactor.

The protein resides in the membrane. The enzyme catalyses a myo-inositol phosphate + H2O = myo-inositol + phosphate. Its pathway is polyol metabolism; myo-inositol biosynthesis; myo-inositol from D-glucose 6-phosphate: step 2/2. The polypeptide is Inositol monophosphatase 3 (bpnt2) (Danio rerio (Zebrafish)).